A 284-amino-acid chain; its full sequence is MSNTIVIVYLGANRIEIGRSADACPQEIIAWKTGSINEKNREELKKIFEHYFQICNILGNREVQVLILEDIFISVVEKRIICSILFKEFDCAHVSFVPRAIVHCLSCNTRNAIVIDIGTNYTTCVPIFDLRPLQQFIKYSKRGKRQVESRIPLPGSLYMPIFFDEEYNSKNCEVDETPVINLVKNIVESLPIDLRRPLRENIIIVNIEEAYETVIRNLFKLKMDTSKIQFPKNYWQAGSACAKILLHYKGSNIVGIERDEFYNNPHIAPDWFDYYFRTGVKRLQ.

This sequence belongs to the actin family. ARP10 subfamily. In terms of assembly, self-associates. Component of the dynactin complex composed of at least ARP1, JNM1, NIP100 and ARP10. Dynactin comprises a short rod of the ARP1 filament attached to ARP10 at its pointed-end and probably associated with the capping protein at its barbed-end. The rod is implicated in dynein cargo binding. A sidearm formed by NIP100 projects from the ARP1 filament and is implicated in motor binding. Interacts with ARP1 and JNM1.

It is found in the cytoplasm. It localises to the cytoskeleton. Pointed-end-associated component of the dynactin complex which assists cytoplasmic dynein by increasing its processivity and by regulation of its cargo binding. The dynactin complex is required for the spindle translocation late in anaphase and is involved in a cell wall synthesis checkpoint. May regulate the association of the dynactin complex with the plasma membrane. The protein is Actin-like protein ARP10 (ARP10) of Saccharomyces cerevisiae (strain ATCC 204508 / S288c) (Baker's yeast).